The sequence spans 291 residues: N-acetylmannosamine kinase (291 aa).

Residues 5–12 (AIDIGGTK) and 132–139 (GVGGGVVS) each bind ATP. His-156, Cys-166, Cys-168, and Cys-173 together coordinate Zn(2+).

It belongs to the ROK (NagC/XylR) family. NanK subfamily. As to quaternary structure, homodimer.

It carries out the reaction an N-acyl-D-mannosamine + ATP = an N-acyl-D-mannosamine 6-phosphate + ADP + H(+). It functions in the pathway amino-sugar metabolism; N-acetylneuraminate degradation; D-fructose 6-phosphate from N-acetylneuraminate: step 2/5. Catalyzes the phosphorylation of N-acetylmannosamine (ManNAc) to ManNAc-6-P. This is N-acetylmannosamine kinase from Escherichia coli O7:K1 (strain IAI39 / ExPEC).